Here is a 198-residue protein sequence, read N- to C-terminus: Recombination protein RecR (198 aa).

The segment at 57–72 (CSICCNLSEHDPCPIC) adopts a C4-type zinc-finger fold. The Toprim domain occupies 80–175 (NIVCVVETPQ…KVTRLGYGLP (96 aa)).

This sequence belongs to the RecR family.

May play a role in DNA repair. It seems to be involved in an RecBC-independent recombinational process of DNA repair. It may act with RecF and RecO. This chain is Recombination protein RecR, found in Endomicrobium trichonymphae.